The sequence spans 242 residues: Tropomyosin-1 (242 aa).

Disordered regions lie at residues M1–A31 and T65–Y96. Residues M1–M242 are a coiled coil. Basic and acidic residues-rich tracts occupy residues T13–Q23 and K70–Y96.

It belongs to the tropomyosin family. As to quaternary structure, homodimer. In terms of tissue distribution, expressed ubiquitously.

The polypeptide is Tropomyosin-1 (TPM1) (Podocoryna carnea (Hydrozoan)).